A 199-amino-acid chain; its full sequence is Nucleoside triphosphate pyrophosphatase (199 aa).

The active-site Proton acceptor is the Asp76.

The protein belongs to the Maf family. The cofactor is a divalent metal cation.

The protein resides in the cytoplasm. It catalyses the reaction a ribonucleoside 5'-triphosphate + H2O = a ribonucleoside 5'-phosphate + diphosphate + H(+). It carries out the reaction a 2'-deoxyribonucleoside 5'-triphosphate + H2O = a 2'-deoxyribonucleoside 5'-phosphate + diphosphate + H(+). Nucleoside triphosphate pyrophosphatase. May have a dual role in cell division arrest and in preventing the incorporation of modified nucleotides into cellular nucleic acids. In Ruegeria sp. (strain TM1040) (Silicibacter sp.), this protein is Nucleoside triphosphate pyrophosphatase.